Here is a 530-residue protein sequence, read N- to C-terminus: Phosphoenolpyruvate carboxykinase (ATP) (530 aa).

Substrate-binding residues include R58, Y195, and K201. ATP contacts are provided by residues K201, H220, and 236–244 (GLSGTGKTT). Mn(2+)-binding residues include K201 and H220. D257 contributes to the Mn(2+) binding site. ATP is bound by residues E285, R321, 440-441 (RI), and T446. A substrate-binding site is contributed by R321.

It belongs to the phosphoenolpyruvate carboxykinase (ATP) family. It depends on Mn(2+) as a cofactor.

The protein localises to the cytoplasm. It catalyses the reaction oxaloacetate + ATP = phosphoenolpyruvate + ADP + CO2. It participates in carbohydrate biosynthesis; gluconeogenesis. Involved in the gluconeogenesis. Catalyzes the conversion of oxaloacetate (OAA) to phosphoenolpyruvate (PEP) through direct phosphoryl transfer between the nucleoside triphosphate and OAA. This chain is Phosphoenolpyruvate carboxykinase (ATP), found in Staphylococcus epidermidis (strain ATCC 35984 / DSM 28319 / BCRC 17069 / CCUG 31568 / BM 3577 / RP62A).